The sequence spans 141 residues: MGRIMAIDYGLKRVGLSVTDPLQIIASPLTTVAANDTLTFLQTYVKKENVEAFVVGYPTDIKDKNTPIIVAISQFIELLQRNFPDQQIFQHDERYTSKLAAASLVEGGFKKKDRRNKENLDKLSATIILQSFLSSYKRHYI.

The protein belongs to the YqgF nuclease family.

Its subcellular location is the cytoplasm. Functionally, could be a nuclease involved in processing of the 5'-end of pre-16S rRNA. This Amoebophilus asiaticus (strain 5a2) protein is Putative pre-16S rRNA nuclease.